Reading from the N-terminus, the 760-residue chain is MKFKLFLGSSFFGVATLLIACGTGRFDQIDDGKIKLAVVTSPSAASSLQTLLDQYNNTKAPADYPVEVVSLDSTGSYTKGKFDTQKRLAAKDKNNFYNLTFNYPDLVSSLAINGMELNLDGVNVSNFEQSFLDFNKNISGVRKPGIYALPATMSGEVLVLNGPVLHYILNSAKKKDGTESKIKTAQLKTASTQAEVKGTMTMASDEQTTKLWTNIQNAAKENAANGTTEKAEKTVSASSLQLKNTNKTTEGTLKIGTDDNTKNLWKKIEDAAKTNGEKGNEKQEATQSNASASLVKLDQKNTSQDKTQNTQTSDDEIKKSWGEYKEVEGGLKGYEFKADVFESWEKLNDFAVRVAKSFSKVSEEKKSGSDIQGVFGIGSLENALYTASFAAGGGDYNNFLFNIKKGRADFSNFFNHNSKTFQSLRDIFNSFKPLIDQKGLISNKHFDTPVNNYAKFHQLAFYVSSTARFPYSFAKDNVKRLIIGKRELEVNPKSMFAIKKENGNNGNSNLLGKVALDNNKSIELYENNIPNGKTDAILIKNQTLISALKNPKQTKSSQRSSQSTNTQNDAICYLAFNSKIRPDDKDIFLLDKFGEKFVTAIVNFEEKTEVKINTLQEKEAVVLPAPQKFKPTDPKSVALVQGPSLIGIHANANEDRSTIKFLNWYLNAEVDWKDGEKKTPAEYLAEKASYLLPFKKVLEKSKQNIKATSKEGEQNQGKKGDGAQNQGKKGDGAQNGKNDKAKHNGFCRYCRQPIFKRFCR.

The signal sequence occupies residues 1–20; sequence MKFKLFLGSSFFGVATLLIA. Cysteine 21 carries the N-palmitoyl cysteine lipid modification. Cysteine 21 carries the S-diacylglycerol cysteine lipid modification. Disordered regions lie at residues 221–243, 272–315, and 705–741; these read ENAA…LQLK, AKTN…TSDD, and IKAT…NDKA. The span at 272 to 284 shows a compositional bias: basic and acidic residues; the sequence is AKTNGEKGNEKQE. Positions 300-312 are enriched in polar residues; it reads KNTSQDKTQNTQT. Basic and acidic residues predominate over residues 705–721; it reads IKATSKEGEQNQGKKGD.

The protein belongs to the MG185/MG260 family.

The protein resides in the cell membrane. This is an uncharacterized protein from Mycoplasma pneumoniae (strain ATCC 29342 / M129 / Subtype 1) (Mycoplasmoides pneumoniae).